A 171-amino-acid chain; its full sequence is Ribosome maturation factor RimM (171 aa).

One can recognise a PRC barrel domain in the interval 97 to 170 (EGEYYYHEII…LVTIHVMEGL (74 aa)).

This sequence belongs to the RimM family. Binds ribosomal protein uS19.

It is found in the cytoplasm. Functionally, an accessory protein needed during the final step in the assembly of 30S ribosomal subunit, possibly for assembly of the head region. Essential for efficient processing of 16S rRNA. May be needed both before and after RbfA during the maturation of 16S rRNA. It has affinity for free ribosomal 30S subunits but not for 70S ribosomes. The protein is Ribosome maturation factor RimM of Bacillus cereus (strain ATCC 14579 / DSM 31 / CCUG 7414 / JCM 2152 / NBRC 15305 / NCIMB 9373 / NCTC 2599 / NRRL B-3711).